We begin with the raw amino-acid sequence, 254 residues long: MTSAAAPNTLNRPSIDPEEVEKFSRIAAEWWDPDSKFKPLHKFNPIRLGFMRDTICDHFGLSGERPFEGLRILDIGCGGGLVCEPMARLGAHVTGVDAAEANIKTASVHADEQGLEIDYRHGVAEQLIEQDEAPFDVVLNLEVMEHVANPHTFLVDCARLVKPGGLMICATINRTSKAFALAIVGAEWVMGWLPRGTHRFHKLVKPSQIRTALREGGMSLRAPVGVSYNPLTDQFSLGEDTAVNYMMVAEKPAG.

S-adenosyl-L-methionine contacts are provided by Arg-47, Gly-76, Asp-97, and Leu-141.

Belongs to the methyltransferase superfamily. UbiG/COQ3 family.

It catalyses the reaction a 3-demethylubiquinol + S-adenosyl-L-methionine = a ubiquinol + S-adenosyl-L-homocysteine + H(+). The enzyme catalyses a 3-(all-trans-polyprenyl)benzene-1,2-diol + S-adenosyl-L-methionine = a 2-methoxy-6-(all-trans-polyprenyl)phenol + S-adenosyl-L-homocysteine + H(+). The protein operates within cofactor biosynthesis; ubiquinone biosynthesis. Functionally, O-methyltransferase that catalyzes the 2 O-methylation steps in the ubiquinone biosynthetic pathway. In Maricaulis maris (strain MCS10) (Caulobacter maris), this protein is Ubiquinone biosynthesis O-methyltransferase.